Reading from the N-terminus, the 298-residue chain is Ribosomal RNA small subunit methyltransferase H (298 aa).

Residues 35–37 (GGH), aspartate 55, phenylalanine 82, aspartate 100, and glutamine 107 each bind S-adenosyl-L-methionine.

Belongs to the methyltransferase superfamily. RsmH family.

Its subcellular location is the cytoplasm. It catalyses the reaction cytidine(1402) in 16S rRNA + S-adenosyl-L-methionine = N(4)-methylcytidine(1402) in 16S rRNA + S-adenosyl-L-homocysteine + H(+). In terms of biological role, specifically methylates the N4 position of cytidine in position 1402 (C1402) of 16S rRNA. This Chlamydia abortus (strain DSM 27085 / S26/3) (Chlamydophila abortus) protein is Ribosomal RNA small subunit methyltransferase H.